The sequence spans 685 residues: ATP-dependent RNA helicase MSS116, mitochondrial (685 aa).

A mitochondrion-targeting transit peptide spans 1 to 34 (MLVLQRIPKRALQFNGVTGTVCSTRLFHHAFNLN). A disordered region spans residues 42 to 107 (SEERRYRNSN…NNGSRRRYQD (66 aa)). Residues 58–69 (SDSNSNNKYRNS) are compositionally biased toward low complexity. Over residues 70 to 86 (SYDDNRSRSNYGGDKRN) the composition is skewed to basic and acidic residues. A compositionally biased stretch (low complexity) spans 88–99 (RNNNNYGNNRNN). Residues 138–166 (SLLEESLLDANVHKAISAMKFESLTPVQQ) carry the Q motif motif. The Helicase ATP-binding domain occupies 170–357 (KPILTTENDV…ATIMNKKDCL (188 aa)). 183 to 190 (AKTGTGKT) contributes to the ATP binding site. The short motif at 298–301 (DEAD) is the DEAD box element. In terms of domain architecture, Helicase C-terminal spans 386–542 (SMVALIQSIE…EDYLNQDKEN (157 aa)). A disordered region spans residues 633–685 (DREFDDEDRYTSRSQNNYKSKQSSKSNRFEGRNDYSNSRRSHANQKRNFTFDD). A compositionally biased stretch (low complexity) spans 644–658 (SRSQNNYKSKQSSKS).

The protein belongs to the DEAD box helicase family. DDX18/HAS1 subfamily.

The protein localises to the mitochondrion matrix. The catalysed reaction is ATP + H2O = ADP + phosphate + H(+). Functionally, ATP-dependent RNA helicase required for mitochondrial splicing of group I and II introns. Also required for efficient mitochondrial translation. The polypeptide is ATP-dependent RNA helicase MSS116, mitochondrial (MSS116) (Kluyveromyces lactis (strain ATCC 8585 / CBS 2359 / DSM 70799 / NBRC 1267 / NRRL Y-1140 / WM37) (Yeast)).